Consider the following 340-residue polypeptide: Organic solute transporter subunit alpha (340 aa).

Residues 1 to 48 are Extracellular-facing; that stretch reads MEPGRTHIKLDPRYTAELLELLETNYSISPACFSHPPTAAQLLRALGP. Residue N25 is glycosylated (N-linked (GlcNAc...) asparagine). The helical transmembrane segment at 49–69 threads the bilayer; that stretch reads VDIALTIILTFLTTGSVAIFL. Over 70 to 87 the chain is Cytoplasmic; it reads EDAVYLYKNTLCPIKKRT. A helical transmembrane segment spans residues 88-108; the sequence is LIWSSSAPTVVSVFCCFGLWI. Over 109-114 the chain is Extracellular; that stretch reads PRALTL. A helical transmembrane segment spans residues 115-135; the sequence is VEMAITSFYAVCFYLLMMVMV. At 136–181 the chain is on the cytoplasmic side; it reads EGFGGKKAVLRTLKDTPMRVHTGPCCCCCPCCPPLILTRKKLQLLL. The chain crosses the membrane as a helical span at residues 182–202; that stretch reads LGPFQYAFFKITLSIVGLFLI. The Extracellular segment spans residues 203–219; the sequence is PDGIYDPGEISEKSAAL. Residues 220 to 240 form a helical membrane-spanning segment; that stretch reads WINNLLAVSTLLALWSLAILF. Topologically, residues 241–255 are cytoplasmic; it reads RQAKMHLGEQNMGSK. Residues 256–276 form a helical membrane-spanning segment; the sequence is FALFQVLVILTALQPAIFSIL. At 277–297 the chain is on the extracellular side; sequence ANSGQIACSPPYSSKIRSQVM. The chain crosses the membrane as a helical span at residues 298-317; it reads NCHMLILETFLMTVLTRMYY. Topologically, residues 318-340 are cytoplasmic; the sequence is RRKDDKVGYEACSLPDLDSALKA. At S330 the chain carries Phosphoserine.

Belongs to the OST-alpha family. In terms of assembly, interacts with SLC51B. The Ost-alpha/Ost-beta complex is a heterodimer composed of alpha (SLC51A) and beta (SLC51B) subunit. In terms of processing, N-glycosylated. As to expression, present at high levels in ileum. In ileum, it is restricted to the apical domain on the mature villus enterocytes with little detectable expression in the goblet cells or crypt enterocytes (at protein level). Expressed in kidney but not in heart, brain, liver, spleen, embryo, lung, thymus, ovary nor testis.

It is found in the cell membrane. It localises to the endoplasmic reticulum membrane. It catalyses the reaction taurocholate(out) = taurocholate(in). It carries out the reaction tauroursodeoxycholate(out) = tauroursodeoxycholate(in). The catalysed reaction is glycoursodeoxycholate(out) = glycoursodeoxycholate(in). The enzyme catalyses glycocholate(out) = glycocholate(in). It catalyses the reaction taurochenodeoxycholate(out) = taurochenodeoxycholate(in). It carries out the reaction glycochenodeoxycholate(out) = glycochenodeoxycholate(in). The catalysed reaction is taurodeoxycholate(out) = taurodeoxycholate(in). The enzyme catalyses glycodeoxycholate(out) = glycodeoxycholate(in). It catalyses the reaction prostaglandin E2(out) = prostaglandin E2(in). It carries out the reaction estrone 3-sulfate(out) = estrone 3-sulfate(in). The catalysed reaction is dehydroepiandrosterone 3-sulfate(out) = dehydroepiandrosterone 3-sulfate(in). Essential component of the Ost-alpha/Ost-beta complex, a heterodimer that acts as the intestinal basolateral transporter responsible for bile acid export from enterocytes into portal blood. Efficiently transports the major species of bile acids (taurocholate). Taurine conjugates are transported more efficiently across the basolateral membrane than glycine-conjugated bile acids. Can also transport steroids such as estrone 3-sulfate and dehydroepiandrosterone 3-sulfate, therefore playing a role in the enterohepatic circulation of sterols. Able to transport eicosanoids such as prostaglandin E2. The polypeptide is Organic solute transporter subunit alpha (Slc51a) (Mus musculus (Mouse)).